Reading from the N-terminus, the 492-residue chain is Catalase isozyme 2 (492 aa).

Residues His-65 and Asn-138 contribute to the active site. Heme is bound at residue Tyr-347.

Belongs to the catalase family. In terms of assembly, homotetramer. The cofactor is heme. In terms of tissue distribution, high levels in green cotyledons, mature leaf, stem and green hypocotyl.

The protein localises to the peroxisome. It carries out the reaction 2 H2O2 = O2 + 2 H2O. Occurs in almost all aerobically respiring organisms and serves to protect cells from the toxic effects of hydrogen peroxide. In Cucurbita pepo (Vegetable marrow), this protein is Catalase isozyme 2 (CAT2).